Reading from the N-terminus, the 331-residue chain is Malate dehydrogenase (331 aa).

Residue 14 to 20 (GAAGSIG) participates in NAD(+) binding. The substrate site is built by arginine 95 and arginine 101. NAD(+)-binding positions include asparagine 108, glutamine 115, and 132–134 (VGN). Substrate contacts are provided by asparagine 134 and arginine 165. The active-site Proton acceptor is the histidine 190.

Belongs to the LDH/MDH superfamily. MDH type 2 family.

The catalysed reaction is (S)-malate + NAD(+) = oxaloacetate + NADH + H(+). Functionally, catalyzes the reversible oxidation of malate to oxaloacetate. This Rhodococcus opacus (strain B4) protein is Malate dehydrogenase.